The following is a 347-amino-acid chain: Twinfilin-2 (347 aa).

ADF-H domains lie at 3–137 (LVLV…RHIT) and 175–311 (GLAF…DEVH). Residues 314 to 347 (QHAHKQAFAKPRGPAGKRGNKRLIKGGGENGGNS) are disordered. Over residues 338–347 (KGGGENGGNS) the composition is skewed to gly residues.

Belongs to the actin-binding proteins ADF family. Twinfilin subfamily. In terms of assembly, interacts with G-actin; ADP-actin form and capping protein (CP).

It localises to the cytoplasm. It is found in the cytoskeleton. The protein resides in the perinuclear region. Actin-binding protein involved in motile and morphological processes. Inhibits actin polymerization, likely by sequestering G-actin. This chain is Twinfilin-2 (twf2), found in Danio rerio (Zebrafish).